Reading from the N-terminus, the 429-residue chain is Glycogenin-1 (429 aa).

UDP contacts are provided by leucine 8, threonine 10, asparagine 11, tyrosine 14, and arginine 76. 14 residues coordinate UDP-alpha-D-glucose: leucine 8, threonine 10, asparagine 11, tyrosine 14, arginine 76, lysine 85, aspartate 101, alanine 102, aspartate 103, asparagine 132, serine 133, aspartate 159, aspartate 162, and glutamine 163. Residues aspartate 101, alanine 102, and aspartate 103 each contribute to the UDP site. Aspartate 101 lines the Mn(2+) pocket. Aspartate 103 is a binding site for Mn(2+). The O-linked (Glc...) tyrosine glycan is linked to tyrosine 194. Histidine 211, glycine 214, and lysine 217 together coordinate UDP. Residue histidine 211 coordinates Mn(2+). Positions 214 and 217 each coordinate UDP-alpha-D-glucose. Disordered stretches follow at residues valine 254–isoleucine 274 and serine 300–histidine 338. Basic and acidic residues-rich tracts occupy residues glutamate 263 to isoleucine 274 and aspartate 309 to histidine 338.

Belongs to the glycosyltransferase 8 family. Glycogenin subfamily. Forms a heterooctamer with one molecule of gyg-1 bound to each protomer of the gys-1 homotetramer. The N-terminus of gys-1 is involved in interprotomer contacts with gyg-1. The interaction with gys-1 is required for glycogen production but is not required for gys-1 intrinsic activity. Mn(2+) is required as a cofactor. In terms of processing, self-glycosylated by the transfer of glucose residues from UDP-glucose to itself, forming an alpha-1,4-glycan of around 10 residues attached to Tyr-194.

It localises to the cytoplasm. The protein resides in the nucleus. It catalyses the reaction L-tyrosyl-[glycogenin] + UDP-alpha-D-glucose = alpha-D-glucosyl-L-tyrosyl-[glycogenin] + UDP + H(+). It carries out the reaction [1,4-alpha-D-glucosyl](n)-L-tyrosyl-[glycogenin] + UDP-alpha-D-glucose = [1,4-alpha-D-glucosyl](n+1)-L-tyrosyl-[glycogenin] + UDP + H(+). It participates in glycan biosynthesis; glycogen biosynthesis. Functionally, self-glucosylating initiator of glycogen synthesis. It catalyzes the formation of a short alpha (1,4)-glucosyl chain covalently attached via a glucose 1-O-tyrosyl linkage to internal tyrosine residues and these chains act as primers for the elongation reaction catalyzed by glycogen synthase. The protein is Glycogenin-1 of Caenorhabditis elegans.